The primary structure comprises 266 residues: Thymidylate synthase (266 aa).

Arg-24 is a dUMP binding site. His-54 lines the (6R)-5,10-methylene-5,6,7,8-tetrahydrofolate pocket. 129–130 (RR) is a dUMP binding site. Cys-149 serves as the catalytic Nucleophile. DUMP contacts are provided by residues 169–172 (RSAD), Asn-180, and 210–212 (HIY). Asp-172 lines the (6R)-5,10-methylene-5,6,7,8-tetrahydrofolate pocket. A (6R)-5,10-methylene-5,6,7,8-tetrahydrofolate-binding site is contributed by Ala-265.

The protein belongs to the thymidylate synthase family. Bacterial-type ThyA subfamily. As to quaternary structure, homodimer.

The protein localises to the cytoplasm. It catalyses the reaction dUMP + (6R)-5,10-methylene-5,6,7,8-tetrahydrofolate = 7,8-dihydrofolate + dTMP. It participates in pyrimidine metabolism; dTTP biosynthesis. Its function is as follows. Catalyzes the reductive methylation of 2'-deoxyuridine-5'-monophosphate (dUMP) to 2'-deoxythymidine-5'-monophosphate (dTMP) while utilizing 5,10-methylenetetrahydrofolate (mTHF) as the methyl donor and reductant in the reaction, yielding dihydrofolate (DHF) as a by-product. This enzymatic reaction provides an intracellular de novo source of dTMP, an essential precursor for DNA biosynthesis. In Mycolicibacterium smegmatis (strain ATCC 700084 / mc(2)155) (Mycobacterium smegmatis), this protein is Thymidylate synthase.